Reading from the N-terminus, the 118-residue chain is Large ribosomal subunit protein bL17 (118 aa).

Belongs to the bacterial ribosomal protein bL17 family. As to quaternary structure, part of the 50S ribosomal subunit. Contacts protein L32.

The chain is Large ribosomal subunit protein bL17 from Hydrogenobaculum sp. (strain Y04AAS1).